Reading from the N-terminus, the 365-residue chain is UDP-N-acetylglucosamine--N-acetylmuramyl-(pentapeptide) pyrophosphoryl-undecaprenol N-acetylglucosamine transferase (365 aa).

Residues 17 to 19 (TGG), Asn129, Arg167, Ser194, Ile250, 269 to 274 (ALTVSE), and Gln295 each bind UDP-N-acetyl-alpha-D-glucosamine.

The protein belongs to the glycosyltransferase 28 family. MurG subfamily.

The protein localises to the cell inner membrane. The enzyme catalyses di-trans,octa-cis-undecaprenyl diphospho-N-acetyl-alpha-D-muramoyl-L-alanyl-D-glutamyl-meso-2,6-diaminopimeloyl-D-alanyl-D-alanine + UDP-N-acetyl-alpha-D-glucosamine = di-trans,octa-cis-undecaprenyl diphospho-[N-acetyl-alpha-D-glucosaminyl-(1-&gt;4)]-N-acetyl-alpha-D-muramoyl-L-alanyl-D-glutamyl-meso-2,6-diaminopimeloyl-D-alanyl-D-alanine + UDP + H(+). It functions in the pathway cell wall biogenesis; peptidoglycan biosynthesis. In terms of biological role, cell wall formation. Catalyzes the transfer of a GlcNAc subunit on undecaprenyl-pyrophosphoryl-MurNAc-pentapeptide (lipid intermediate I) to form undecaprenyl-pyrophosphoryl-MurNAc-(pentapeptide)GlcNAc (lipid intermediate II). This is UDP-N-acetylglucosamine--N-acetylmuramyl-(pentapeptide) pyrophosphoryl-undecaprenol N-acetylglucosamine transferase from Shewanella pealeana (strain ATCC 700345 / ANG-SQ1).